The sequence spans 567 residues: Sensor histidine kinase MtrB (567 aa).

Residues 1 to 15 (MIFGSRRRIRGRRGR) are compositionally biased toward basic residues. The disordered stretch occupies residues 1–20 (MIFGSRRRIRGRRGRSGPMT). The next 2 membrane-spanning stretches (helical) occupy residues 42–62 (VVALTLGLSLAVILALGFVLT) and 213–233 (GTMATGGLVLLVLLAGIALLV). In terms of domain architecture, HAMP spans 235–287 (RQVVVPVRSASRIAERFAEGHLSERMPVRGEDDMARLAVSFNDMAESLSRQIA). The 218-residue stretch at 302–519 (DVSHELRTPL…CFRLTLPLVR (218 aa)) folds into the Histidine kinase domain. H305 is subject to Phosphohistidine; by autocatalysis. The interval 526 to 567 (SPLPMKPIPQPVLQPVAQPNPQPMPPEYKERQRPREHAEWSG) is disordered. The span at 529–551 (PMKPIPQPVLQPVAQPNPQPMPP) shows a compositional bias: pro residues. Over residues 552–567 (EYKERQRPREHAEWSG) the composition is skewed to basic and acidic residues.

The protein localises to the cell membrane. It carries out the reaction ATP + protein L-histidine = ADP + protein N-phospho-L-histidine.. Member of the two-component regulatory system MtrA/MtrB. Seems to function as a membrane-associated protein kinase that phosphorylates MtrA in response to environmental signals. The sequence is that of Sensor histidine kinase MtrB (mtrB) from Mycobacterium bovis (strain ATCC BAA-935 / AF2122/97).